The sequence spans 235 residues: Putative HAD-hydrolase YfnB (235 aa).

The Nucleophile role is filled by D10.

This sequence belongs to the HAD-like hydrolase superfamily. YjjG family.

This is Putative HAD-hydrolase YfnB (yfnB) from Bacillus subtilis (strain 168).